Here is a 377-residue protein sequence, read N- to C-terminus: Nitric oxide reductase FlRd-NAD(+) reductase (377 aa).

It belongs to the FAD-dependent oxidoreductase family. Requires FAD as cofactor.

It localises to the cytoplasm. It catalyses the reaction 2 reduced [nitric oxide reductase rubredoxin domain] + NAD(+) + H(+) = 2 oxidized [nitric oxide reductase rubredoxin domain] + NADH. It participates in nitrogen metabolism; nitric oxide reduction. Functionally, one of at least two accessory proteins for anaerobic nitric oxide (NO) reductase. Reduces the rubredoxin moiety of NO reductase. This is Nitric oxide reductase FlRd-NAD(+) reductase from Escherichia coli (strain SMS-3-5 / SECEC).